Consider the following 79-residue polypeptide: MNKTIEYQKEFLKENNQLLSIPVKKNILKEILQNDEQDTIITNCITKEVSINLDLIKNPKVLYSIYIMVVEYLKSINIA.

Belongs to the asfivirus D79L family.

This is an uncharacterized protein from African swine fever virus (strain Badajoz 1971 Vero-adapted) (Ba71V).